The primary structure comprises 163 residues: Nucleotide-binding protein YajQ (163 aa).

It belongs to the YajQ family.

In terms of biological role, nucleotide-binding protein. This chain is Nucleotide-binding protein YajQ, found in Salmonella paratyphi A (strain ATCC 9150 / SARB42).